The primary structure comprises 352 residues: MRIVNENLCNNEISIVIGKGALSALEELKDKKVALFYSQKIDPSRVKSHLKSFIEIPIIDGEGAKDIQYALKLVKLLFENGFDRGDYVIALGGGTVTDVVGFVASIYMRGINLINIPTTLLGMVDAAIGGKTGVNFENVKNVLGTFYQPTMIISDLNFLETLPLEEIKKGLAEVIKYGLVLDKDLYDYLAMNKEKIFAKDESALEEIIYKSSVDKFSVVKADERETKGIRIVLNFGHTIGHAIEAGSNFTVPHGYAISVGMVCEAKMAEEVGYAEEGVVEDVTWILSQYELPLTVDSLNAKIDVKKAIDAITKDKKVRGGYVMMPFPTRIGDWKRVDVPIETLKGFAEQCLR.

Residues Asp60–Lys65, Thr118–Thr119, Lys131, Lys140, and Phe158–Thr161 contribute to the NAD(+) site. Zn(2+) contacts are provided by Glu173, His237, and His253.

It belongs to the sugar phosphate cyclases superfamily. Dehydroquinate synthase family. Requires NAD(+) as cofactor. Co(2+) serves as cofactor. The cofactor is Zn(2+).

The protein localises to the cytoplasm. It catalyses the reaction 7-phospho-2-dehydro-3-deoxy-D-arabino-heptonate = 3-dehydroquinate + phosphate. Its pathway is metabolic intermediate biosynthesis; chorismate biosynthesis; chorismate from D-erythrose 4-phosphate and phosphoenolpyruvate: step 2/7. In terms of biological role, catalyzes the conversion of 3-deoxy-D-arabino-heptulosonate 7-phosphate (DAHP) to dehydroquinate (DHQ). The polypeptide is 3-dehydroquinate synthase (Sulfurisphaera tokodaii (strain DSM 16993 / JCM 10545 / NBRC 100140 / 7) (Sulfolobus tokodaii)).